The sequence spans 484 residues: tRNA sulfurtransferase (484 aa).

One can recognise a THUMP domain in the interval 63 to 167; it reads KEMGERLTCM…DKRLFVIHSQ (105 aa). ATP is bound by residues 185–186, Lys267, Gly289, and Gln298; that span reads LM. A disulfide bridge links Cys346 with Cys457. Residues 405–483 enclose the Rhodanese domain; that stretch reads ALAGQIVIDI…GHANVRVYRP (79 aa). Catalysis depends on Cys457, which acts as the Cysteine persulfide intermediate.

Belongs to the ThiI family.

The protein localises to the cytoplasm. It carries out the reaction [ThiI sulfur-carrier protein]-S-sulfanyl-L-cysteine + a uridine in tRNA + 2 reduced [2Fe-2S]-[ferredoxin] + ATP + H(+) = [ThiI sulfur-carrier protein]-L-cysteine + a 4-thiouridine in tRNA + 2 oxidized [2Fe-2S]-[ferredoxin] + AMP + diphosphate. The enzyme catalyses [ThiS sulfur-carrier protein]-C-terminal Gly-Gly-AMP + S-sulfanyl-L-cysteinyl-[cysteine desulfurase] + AH2 = [ThiS sulfur-carrier protein]-C-terminal-Gly-aminoethanethioate + L-cysteinyl-[cysteine desulfurase] + A + AMP + 2 H(+). The protein operates within cofactor biosynthesis; thiamine diphosphate biosynthesis. Its function is as follows. Catalyzes the ATP-dependent transfer of a sulfur to tRNA to produce 4-thiouridine in position 8 of tRNAs, which functions as a near-UV photosensor. Also catalyzes the transfer of sulfur to the sulfur carrier protein ThiS, forming ThiS-thiocarboxylate. This is a step in the synthesis of thiazole, in the thiamine biosynthesis pathway. The sulfur is donated as persulfide by IscS. This chain is tRNA sulfurtransferase, found in Pseudomonas fluorescens (strain Pf0-1).